Consider the following 323-residue polypeptide: 4-diphosphocytidyl-2-C-methyl-D-erythritol kinase (323 aa).

Lys25 is an active-site residue. An ATP-binding site is contributed by Pro110–Ala120. The active site involves Asp152.

It belongs to the GHMP kinase family. IspE subfamily.

The catalysed reaction is 4-CDP-2-C-methyl-D-erythritol + ATP = 4-CDP-2-C-methyl-D-erythritol 2-phosphate + ADP + H(+). It participates in isoprenoid biosynthesis; isopentenyl diphosphate biosynthesis via DXP pathway; isopentenyl diphosphate from 1-deoxy-D-xylulose 5-phosphate: step 3/6. Catalyzes the phosphorylation of the position 2 hydroxy group of 4-diphosphocytidyl-2C-methyl-D-erythritol. The polypeptide is 4-diphosphocytidyl-2-C-methyl-D-erythritol kinase (Mycobacterium leprae (strain Br4923)).